The sequence spans 123 residues: Large ribosomal subunit protein bL19 (123 aa).

Belongs to the bacterial ribosomal protein bL19 family.

In terms of biological role, this protein is located at the 30S-50S ribosomal subunit interface and may play a role in the structure and function of the aminoacyl-tRNA binding site. In Ruegeria sp. (strain TM1040) (Silicibacter sp.), this protein is Large ribosomal subunit protein bL19.